Here is a 180-residue protein sequence, read N- to C-terminus: Protein GrpE (180 aa).

Residues 1 to 25 (MSKKKAEDKQPIIKDEAVEEPKSDS) form a disordered region.

Belongs to the GrpE family. As to quaternary structure, homodimer.

Its subcellular location is the cytoplasm. Its function is as follows. Participates actively in the response to hyperosmotic and heat shock by preventing the aggregation of stress-denatured proteins, in association with DnaK and GrpE. It is the nucleotide exchange factor for DnaK and may function as a thermosensor. Unfolded proteins bind initially to DnaJ; upon interaction with the DnaJ-bound protein, DnaK hydrolyzes its bound ATP, resulting in the formation of a stable complex. GrpE releases ADP from DnaK; ATP binding to DnaK triggers the release of the substrate protein, thus completing the reaction cycle. Several rounds of ATP-dependent interactions between DnaJ, DnaK and GrpE are required for fully efficient folding. The chain is Protein GrpE from Fructilactobacillus sanfranciscensis (Lactobacillus sanfranciscensis).